The following is a 444-amino-acid chain: D(2) dopamine receptor (444 aa).

Topologically, residues 1–37 (MDPLNLSWYDDDPESRNWSRPFNGSEGKADRPPYNYY) are extracellular. N-linked (GlcNAc...) asparagine glycans are attached at residues asparagine 5, asparagine 17, and asparagine 23. The helical transmembrane segment at 38-60 (AMLLTLLIFVIVFGNVLVCMAVS) threads the bilayer. Over 61–70 (REKALQTTTN) the chain is Cytoplasmic. A helical membrane pass occupies residues 71 to 93 (YLIVSLAVADLLVATLVMPWVVY). The Extracellular portion of the chain corresponds to 94 to 108 (LEVVGEWKFSRIHCD). Cysteine 107 and cysteine 182 are joined by a disulfide. Residues 109–130 (IFVTLDVMMCTASILNLCAISI) form a helical membrane-spanning segment. Residues 131 to 151 (DRYTAVAMPMLYNTRYSSKRR) are Cytoplasmic-facing. A helical membrane pass occupies residues 152–172 (VTVMIAIVWVLSFTISCPMLF). Over 173 to 188 (GLNNTDQNECIIANPA) the chain is Extracellular. A helical membrane pass occupies residues 189–213 (FVVYSSIVSFYVPFIVTLLVYIKIY). An interaction with PPP1R9B region spans residues 211-374 (KIYIVLRRRR…SQQKEKKATQ (164 aa)). At 214–374 (IVLRRRRKRV…SQQKEKKATQ (161 aa)) the chain is on the cytoplasmic side. A disordered region spans residues 281–332 (MEMLSSTSPPERTRYSPIPPSHHQLTLPDPSHHGLHSTPDSPAKPEKNGHAK). The helical transmembrane segment at 375 to 396 (MLAIVLGVFIICWLPFFITHIL) threads the bilayer. Over 397–410 (NIHCDCNIPPVLYS) the chain is Extracellular. Cysteine 400 and cysteine 402 are joined by a disulfide. A helical membrane pass occupies residues 411 to 432 (AFTWLGYVNSAVNPIIYTTFNI). The Cytoplasmic segment spans residues 433–444 (EFRKAFLKILHC). Cysteine 444 carries S-palmitoyl cysteine lipidation.

It belongs to the G-protein coupled receptor 1 family. In terms of assembly, forms homo- and heterooligomers with DRD4. The interaction with DRD4 may modulate agonist-induced downstream signaling. Interacts with CADPS and CADPS2. Interacts with GPRASP1, PPP1R9B and CLIC6. Interacts with ARRB2. Interacts with HTR2A. Interacts with DRD1. Interacts with KCNA2. Palmitoylated. Palmitoylation which is required for proper localization to the plasma membrane and stability of the receptor could be carried on by ZDHHC4, ZDHHC3 and ZDHHC8.

The protein resides in the cell membrane. The protein localises to the golgi apparatus membrane. Its function is as follows. Dopamine receptor whose activity is mediated by G proteins which inhibit adenylyl cyclase. Positively regulates postnatal regression of retinal hyaloid vessels via suppression of VEGFR2/KDR activity, downstream of OPN5. This chain is D(2) dopamine receptor (DRD2), found in Bos taurus (Bovine).